A 753-amino-acid polypeptide reads, in one-letter code: Synaptotagmin-like protein 5 (753 aa).

A RabBD domain is found at 7-123 (FINLSFLLDH…IISGEWFLEE (117 aa)). The FYVE-type zinc finger occupies 64–106 (CVHCHKTLGLIFDRGDPCQACSLRVCSECRVTGLDGSWKCTVC). 3 disordered regions span residues 145–279 (RRSP…SREH), 297–359 (LTKS…LNSL), and 380–404 (LASGLSTNSQAGSDRKRSYLNVPDA). Phosphoserine is present on Ser147. Positions 150 to 174 (SEETQNQEQAQQCVDKSDTLSSVRQ) are enriched in polar residues. The segment covering 195 to 206 (TRGEIRTPKPES) has biased composition (basic and acidic residues). Residues 214 to 223 (LDSQNLQSFK) are compositionally biased toward polar residues. The span at 224-237 (SASGSDRGSTTSSD) shows a compositional bias: low complexity. Residues 249-275 (KSSYSNGGIPVTQRSPVPSAHSVTSIN) show a composition bias toward polar residues. Over residues 380–391 (LASGLSTNSQAG) the composition is skewed to polar residues. C2 domains lie at 429–550 (VTGE…DEWF) and 597–717 (KRGK…VDWM).

Binds RAB27A that has been activated by GTP-binding.

Its subcellular location is the membrane. Its function is as follows. May act as Rab effector protein and play a role in vesicle trafficking. Binds phospholipids. This Mus musculus (Mouse) protein is Synaptotagmin-like protein 5 (Sytl5).